Reading from the N-terminus, the 572-residue chain is Proline--tRNA ligase (572 aa).

This sequence belongs to the class-II aminoacyl-tRNA synthetase family. ProS type 1 subfamily. In terms of assembly, homodimer.

The protein resides in the cytoplasm. It carries out the reaction tRNA(Pro) + L-proline + ATP = L-prolyl-tRNA(Pro) + AMP + diphosphate. In terms of biological role, catalyzes the attachment of proline to tRNA(Pro) in a two-step reaction: proline is first activated by ATP to form Pro-AMP and then transferred to the acceptor end of tRNA(Pro). As ProRS can inadvertently accommodate and process non-cognate amino acids such as alanine and cysteine, to avoid such errors it has two additional distinct editing activities against alanine. One activity is designated as 'pretransfer' editing and involves the tRNA(Pro)-independent hydrolysis of activated Ala-AMP. The other activity is designated 'posttransfer' editing and involves deacylation of mischarged Ala-tRNA(Pro). The misacylated Cys-tRNA(Pro) is not edited by ProRS. This Cronobacter sakazakii (strain ATCC BAA-894) (Enterobacter sakazakii) protein is Proline--tRNA ligase.